The primary structure comprises 845 residues: Alanine--tRNA ligase (845 aa).

Positions 552, 556, 653, and 657 each coordinate Zn(2+).

The protein belongs to the class-II aminoacyl-tRNA synthetase family. The cofactor is Zn(2+).

Its subcellular location is the cytoplasm. The enzyme catalyses tRNA(Ala) + L-alanine + ATP = L-alanyl-tRNA(Ala) + AMP + diphosphate. Functionally, catalyzes the attachment of alanine to tRNA(Ala) in a two-step reaction: alanine is first activated by ATP to form Ala-AMP and then transferred to the acceptor end of tRNA(Ala). Also edits incorrectly charged Ser-tRNA(Ala) and Gly-tRNA(Ala) via its editing domain. The polypeptide is Alanine--tRNA ligase (Campylobacter fetus subsp. fetus (strain 82-40)).